The chain runs to 123 residues: MKALVWVAVGGALGAIVRYFFYKFVPQVYDFPLATFLVNVVASFLLGFIIGAFEAKPWGQQLKLALATGFCGALSTFSTFAADNYILLRSSKYITAFVYTAVSVGLGIVSVALGEDLAQRLLK.

4 consecutive transmembrane segments (helical) span residues 5–25 (VWVA…YKFV), 33–53 (LATF…IGAF), 62–82 (LKLA…TFAA), and 94–114 (ITAF…VALG). Residues Gly-72 and Ser-75 each contribute to the Na(+) site.

The protein belongs to the fluoride channel Fluc/FEX (TC 1.A.43) family.

The protein localises to the cell inner membrane. The enzyme catalyses fluoride(in) = fluoride(out). Na(+) is not transported, but it plays an essential structural role and its presence is essential for fluoride channel function. Functionally, fluoride-specific ion channel. Important for reducing fluoride concentration in the cell, thus reducing its toxicity. This Ignicoccus hospitalis (strain KIN4/I / DSM 18386 / JCM 14125) protein is Fluoride-specific ion channel FluC.